A 993-amino-acid polypeptide reads, in one-letter code: Lateral signaling target protein 2 homolog (993 aa).

4 disordered regions span residues 340 to 449 (DQRN…DTTD), 494 to 623 (DGYG…TVVQ), 759 to 813 (GARH…GDQE), and 825 to 902 (AVNE…PPAW). A compositionally biased stretch (low complexity) spans 343 to 360 (NNNNNINNNSSSSSNSNS). A compositionally biased stretch (polar residues) spans 372-405 (RSPSMLSLSTASPTPSHSIGSTFSAATSSTNPPV). Positions 409-448 (DGDDADDDDDGDDDDEDDDDDVDDDLVGNDDSDDDDDDTT) are enriched in acidic residues. Residues S525 and S526 each carry the phosphoserine modification. Residues 535–549 (SHNNTTTIKSPDSDG) show a composition bias toward polar residues. Over residues 559 to 608 (SRQRHSHHHHRHHHHHHRHSSHSSHSHHHQHQQHHSQPHPHRTTRSGRKR) the composition is skewed to basic residues. Residues 759-801 (GARHSAGASMQRNHTTIDNNNSTSSSPPDATITTTTTTTTTRS) show a composition bias toward low complexity. S808 is subject to Phosphoserine. Low complexity-rich tracts occupy residues 842-862 (SNTP…QNSP) and 884-896 (TTAT…GTGT). The FYVE-type zinc finger occupies 905–965 (DGKAPRCMSC…VCRDCYAREI (61 aa)). Zn(2+) is bound by residues C911, C914, C927, C930, C935, C938, C957, and C960. Residues 968-993 (SGGGGGGVVQMQRQQAANRPQTASAS) form a disordered region. Polar residues predominate over residues 978-993 (MQRQQAANRPQTASAS).

This sequence belongs to the lst-2 family.

Its function is as follows. Negative regulator of epidermal growth factor receptor (EGFR) signaling. In Drosophila willistoni (Fruit fly), this protein is Lateral signaling target protein 2 homolog.